The primary structure comprises 597 residues: Cytosolic Fe-S cluster assembly factor nar1 (597 aa).

Position 20 (C20) interacts with [4Fe-4S] cluster. The disordered stretch occupies residues 25-46 (ESLPQKESQSENPYEVTKEDKV). [4Fe-4S] cluster-binding residues include C61, C64, C67, C208, and C263. The disordered stretch occupies residues 424–449 (RLPGAKPQAVSSSANRRQPMSRNAAP). Polar residues predominate over residues 432–444 (AVSSSANRRQPMS). [4Fe-4S] cluster-binding residues include C464 and C468.

Belongs to the NARF family.

Component of the cytosolic Fe/S protein assembly machinery. Required for maturation of extramitochondrial Fe/S proteins. May play a role in the transfer of pre-assembled Fe/S clusters to target apoproteins. The sequence is that of Cytosolic Fe-S cluster assembly factor nar1 (nar1) from Aspergillus fumigatus (strain ATCC MYA-4609 / CBS 101355 / FGSC A1100 / Af293) (Neosartorya fumigata).